Reading from the N-terminus, the 413-residue chain is Arginine biosynthesis bifunctional protein ArgJ (413 aa).

Positions 160, 186, 197, 284, 408, and 413 each coordinate substrate. T197 serves as the catalytic Nucleophile.

The protein belongs to the ArgJ family. Heterotetramer of two alpha and two beta chains.

It localises to the cytoplasm. It catalyses the reaction N(2)-acetyl-L-ornithine + L-glutamate = N-acetyl-L-glutamate + L-ornithine. The enzyme catalyses L-glutamate + acetyl-CoA = N-acetyl-L-glutamate + CoA + H(+). It functions in the pathway amino-acid biosynthesis; L-arginine biosynthesis; L-ornithine and N-acetyl-L-glutamate from L-glutamate and N(2)-acetyl-L-ornithine (cyclic): step 1/1. It participates in amino-acid biosynthesis; L-arginine biosynthesis; N(2)-acetyl-L-ornithine from L-glutamate: step 1/4. Its function is as follows. Catalyzes two activities which are involved in the cyclic version of arginine biosynthesis: the synthesis of N-acetylglutamate from glutamate and acetyl-CoA as the acetyl donor, and of ornithine by transacetylation between N(2)-acetylornithine and glutamate. The protein is Arginine biosynthesis bifunctional protein ArgJ of Burkholderia pseudomallei (strain K96243).